The sequence spans 384 residues: 8-amino-7-oxononanoate synthase (384 aa).

Arg21 contacts substrate. 108–109 provides a ligand contact to pyridoxal 5'-phosphate; sequence GF. His133 provides a ligand contact to substrate. The pyridoxal 5'-phosphate site is built by Ser179, His207, and Thr233. Position 236 is an N6-(pyridoxal phosphate)lysine (Lys236). Position 352 (Thr352) interacts with substrate.

It belongs to the class-II pyridoxal-phosphate-dependent aminotransferase family. BioF subfamily. As to quaternary structure, homodimer. Pyridoxal 5'-phosphate is required as a cofactor.

It carries out the reaction 6-carboxyhexanoyl-[ACP] + L-alanine + H(+) = (8S)-8-amino-7-oxononanoate + holo-[ACP] + CO2. The protein operates within cofactor biosynthesis; biotin biosynthesis. Catalyzes the decarboxylative condensation of pimeloyl-[acyl-carrier protein] and L-alanine to produce 8-amino-7-oxononanoate (AON), [acyl-carrier protein], and carbon dioxide. This chain is 8-amino-7-oxononanoate synthase, found in Escherichia coli O6:H1 (strain CFT073 / ATCC 700928 / UPEC).